Reading from the N-terminus, the 21-residue chain is Fibrinogen beta chain (21 aa).

Glutamine 1 bears the Pyrrolidone carboxylic acid mark. The segment covering 1–11 (QPSYDYDEEED) has biased composition (acidic residues). The tract at residues 1-21 (QPSYDYDEEEDDRAKLRLDAR) is disordered. Sulfotyrosine is present on tyrosine 6. The span at 12-21 (DRAKLRLDAR) shows a compositional bias: basic and acidic residues.

In terms of assembly, heterohexamer; disulfide linked. Contains 2 sets of 3 non-identical chains (alpha, beta and gamma). The 2 heterotrimers are in head to head conformation with the N-termini in a small central domain. Post-translationally, conversion of fibrinogen to fibrin is triggered by thrombin, which cleaves fibrinopeptides A and B from alpha and beta chains, and thus exposes the N-terminal polymerization sites responsible for the formation of the soft clot.

The protein resides in the secreted. Functionally, cleaved by the protease thrombin to yield monomers which, together with fibrinogen alpha (FGA) and fibrinogen gamma (FGG), polymerize to form an insoluble fibrin matrix. Fibrin has a major function in hemostasis as one of the primary components of blood clots. In addition, functions during the early stages of wound repair to stabilize the lesion and guide cell migration during re-epithelialization. Was originally thought to be essential for platelet aggregation, based on in vitro studies using anticoagulated blood. However subsequent studies have shown that it is not absolutely required for thrombus formation in vivo. Enhances expression of SELP in activated platelets. Maternal fibrinogen is essential for successful pregnancy. Fibrin deposition is also associated with infection, where it protects against IFNG-mediated hemorrhage. May also facilitate the antibacterial immune response via both innate and T-cell mediated pathways. The polypeptide is Fibrinogen beta chain (FGB) (Antilocapra americana (Pronghorn)).